The primary structure comprises 638 residues: Phosphomethylpyrimidine synthase (638 aa).

Residues Asn-236, Met-265, Tyr-294, His-330, 350–352 (SRG), 391–394 (DGLR), and Glu-430 contribute to the substrate site. Residue His-434 coordinates Zn(2+). A substrate-binding site is contributed by Tyr-457. A Zn(2+)-binding site is contributed by His-498. 3 residues coordinate [4Fe-4S] cluster: Cys-578, Cys-581, and Cys-586.

It belongs to the ThiC family. As to quaternary structure, homodimer. The cofactor is [4Fe-4S] cluster.

It catalyses the reaction 5-amino-1-(5-phospho-beta-D-ribosyl)imidazole + S-adenosyl-L-methionine = 4-amino-2-methyl-5-(phosphooxymethyl)pyrimidine + CO + 5'-deoxyadenosine + formate + L-methionine + 3 H(+). It participates in cofactor biosynthesis; thiamine diphosphate biosynthesis. In terms of biological role, catalyzes the synthesis of the hydroxymethylpyrimidine phosphate (HMP-P) moiety of thiamine from aminoimidazole ribotide (AIR) in a radical S-adenosyl-L-methionine (SAM)-dependent reaction. In Polaromonas sp. (strain JS666 / ATCC BAA-500), this protein is Phosphomethylpyrimidine synthase.